Here is a 738-residue protein sequence, read N- to C-terminus: YTH domain-containing protein 1 (738 aa).

Basic and acidic residues predominate over residues 1–12 (MAADSREEKDGE). Positions 1–341 (MAADSREEKD…KHEKLSSSVR (341 aa)) are disordered. S35 is subject to Phosphoserine. The span at 50 to 59 (ERMESIDTKR) shows a compositional bias: basic and acidic residues. Over residues 63-90 (SIHSRQLISKPLSSSVSNNKRIVSTKGK) the composition is skewed to polar residues. The segment covering 91–115 (SVTEYKNEEYQRSERNKRLDADRKI) has biased composition (basic and acidic residues). Residue K96 forms a Glycyl lysine isopeptide (Lys-Gly) (interchain with G-Cter in SUMO2) linkage. 2 positions are modified to phosphoserine: S118 and S120. The segment covering 124–144 (EPYKSQPEKPCLRKRDSERRA) has biased composition (basic and acidic residues). The residue at position 146 (S146) is a Phosphoserine. T148 is subject to Phosphothreonine. 2 stretches are compositionally biased toward basic and acidic residues: residues 151–163 (GSERIGLEVDRRA) and 170–185 (SKEEGNSEEYGSDHET). Residues 186 to 197 (GSSASSEQGNNT) show a composition bias toward polar residues. Positions 198 to 257 (ENEEEGGEEDVEEDEEVDEDGDDDEEVDEDAEEEEDEEEDEEEEDEEEEEEEEEEYEQDE) are enriched in acidic residues. The span at 258-273 (RDQKEEGNDYDTRSEA) shows a compositional bias: basic and acidic residues. Residues 283–292 (FTDGSVRSGS) show a composition bias toward polar residues. 5 positions are modified to phosphoserine: S311, S318, S320, S321, and S323. A compositionally biased stretch (low complexity) spans 318 to 328 (SGSSASESYAG). Residues 358 to 495 (ARFFLIKSNN…ECGTQLCLLF (138 aa)) enclose the YTH domain. RNA contacts are provided by residues 364 to 366 (KSN) and W380. At S427 the chain carries Phosphoserine. An RNA-binding site is contributed by W431. Position 438 is a phosphoserine (S438). D479 contacts RNA. Over residues 512-526 (HKRRMHSQPRSRGRP) the composition is skewed to basic residues. Disordered regions lie at residues 512 to 566 (HKRR…RPGY), 618 to 654 (GMPPYPGIEQPPHHPYYQHHAPPPQAHPPYSGHHPVP), and 680 to 738 (AVVS…RYRR). Residues 527 to 566 (SRREPVRDVGRRRPEDYDIHNSRKKPRIDYPPEFHQRPGY) show a composition bias toward basic and acidic residues. S548 is subject to Phosphoserine. The span at 690–738 (RERDRERERDRPRDNRRDRERDRGRDRERERERICDRDRDRGERGRYRR) shows a compositional bias: basic and acidic residues.

Interacts with SRSF1. Interacts with SRSF2. Interacts with SRSF3. Interacts with SRSF7. Interacts with SRSF10. Interacts with CPSF6. Interacts with KHDRBS1/SAM68. Interacts with TRA2B. Interacts with KHDRBS3. Interacts with EMD. Interacts with RBMX. Interacts with ZCCHC8. Tyrosine phosphorylated. In terms of tissue distribution, ubiquitous.

It localises to the nucleus. The protein localises to the nucleus speckle. Regulator of alternative splicing that specifically recognizes and binds N6-methyladenosine (m6A)-containing RNAs. M6A is a modification present at internal sites of mRNAs and some non-coding RNAs and plays a role in the efficiency of mRNA splicing, processing and stability. Acts as a key regulator of exon-inclusion or exon-skipping during alternative splicing via interaction with mRNA splicing factors SRSF3 and SRSF10. Specifically binds m6A-containing mRNAs and promotes recruitment of SRSF3 to its mRNA-binding elements adjacent to m6A sites, leading to exon-inclusion during alternative splicing. In contrast, interaction with SRSF3 prevents interaction with SRSF10, a splicing factor that promotes exon skipping: this prevents SRSF10 from binding to its mRNA-binding sites close to m6A-containing regions, leading to inhibit exon skipping during alternative splicing. May also regulate alternative splice site selection. Also involved in nuclear export of m6A-containing mRNAs via interaction with SRSF3: interaction with SRSF3 facilitates m6A-containing mRNA-binding to both SRSF3 and NXF1, promoting mRNA nuclear export. Involved in S-adenosyl-L-methionine homeostasis by regulating expression of MAT2A transcripts, probably by binding m6A-containing MAT2A mRNAs. Also recognizes and binds m6A on other RNA molecules. Involved in random X inactivation mediated by Xist RNA: recognizes and binds m6A-containing Xist and promotes transcription repression activity of Xist. Also recognizes and binds m6A-containing single-stranded DNA. Involved in germline development: required for spermatogonial development in males and oocyte growth and maturation in females, probably via its role in alternative splicing. This is YTH domain-containing protein 1 (Ythdc1) from Rattus norvegicus (Rat).